The chain runs to 31 residues: Cytochrome b6-f complex subunit 6 (31 aa).

A helical membrane pass occupies residues 4–24; the sequence is VVSYLGILAAFALVTIGIFLV.

The protein belongs to the PetL family. As to quaternary structure, the 4 large subunits of the cytochrome b6-f complex are cytochrome b6, subunit IV (17 kDa polypeptide, PetD), cytochrome f and the Rieske protein, while the 4 small subunits are PetG, PetL, PetM and PetN. The complex functions as a dimer.

It localises to the plastid. The protein localises to the chloroplast thylakoid membrane. Functionally, component of the cytochrome b6-f complex, which mediates electron transfer between photosystem II (PSII) and photosystem I (PSI), cyclic electron flow around PSI, and state transitions. PetL is important for photoautotrophic growth as well as for electron transfer efficiency and stability of the cytochrome b6-f complex. In Mesostigma viride (Green alga), this protein is Cytochrome b6-f complex subunit 6.